The chain runs to 1214 residues: [F-actin]-monooxygenase mical1 (1214 aa).

The tract at residues 1-488 (MVNPLDSVNP…KRLYEAEEQE (488 aa)) is monooxygenase domain. FAD is bound by residues C96, 115 to 117 (EKR), 122 to 124 (RNN), F182, Y292, and D392. Residues 484–505 (AEEQESKPNKLKKPDIKAKPRK) form a disordered region. One can recognise a Calponin-homology (CH) domain in the interval 508 to 614 (MKRLEELLSW…YLTQIRNALT (107 aa)). The disordered stretch occupies residues 649-676 (HKDRLASVKGPRQQNMKEKEEKKDVKEE). Over residues 663–676 (NMKEKEEKKDVKEE) the composition is skewed to basic and acidic residues. The region spanning 686-748 (EPCYFCKKHL…ELHSLAEEEE (63 aa)) is the LIM zinc-binding domain. Residues C688, C691, H709, C712, C715, C718, C738, and H741 each coordinate Zn(2+). The disordered stretch occupies residues 747–1019 (EEGDEGHGGA…DDEDEDEEDL (273 aa)). Over residues 796–815 (PDFDESTEFPAPDQDEPPDL) the composition is skewed to acidic residues. Polar residues predominate over residues 828–841 (SAENTNMENQQHNI). Low complexity predominate over residues 910–922 (RGSSSAASTSSSS). The span at 974 to 987 (SPWNLSSPRLQQRF) shows a compositional bias: polar residues. The span at 1003 to 1019 (VSEDDNEDDEDEDEEDL) shows a compositional bias: acidic residues. Positions 1053 to 1199 (KMTEIQRFHK…EVNDQFNSSL (147 aa)) constitute a bMERB domain. A coiled-coil region spans residues 1061–1131 (HKAQSIQRRL…DLMVASRQLE (71 aa)). The tract at residues 1194-1214 (QFNSSLDAKRRSTTASQVHWE) is disordered.

Belongs to the Mical family. The cofactor is FAD.

The protein localises to the cytoplasm. It localises to the cytoskeleton. Its subcellular location is the midbody. It is found in the endosome membrane. The enzyme catalyses L-methionyl-[F-actin] + NADPH + O2 + H(+) = L-methionyl-(R)-S-oxide-[F-actin] + NADP(+) + H2O. The catalysed reaction is NADPH + O2 + H(+) = H2O2 + NADP(+). In terms of biological role, monooxygenase that promotes depolymerization of F-actin by mediating oxidation of specific methionine residues on actin to form methionine-sulfoxide, resulting in actin filament disassembly and prevent repolymerization. May be involved in endosomal tubule extension and neosynthesized protein export. The sequence is that of [F-actin]-monooxygenase mical1 (mical1) from Danio rerio (Zebrafish).